The chain runs to 669 residues: Matrix metalloproteinase-15 (669 aa).

A signal peptide (or 45) is located at residues 1 to 41 (MGSDPSAPGRPGWTGSLLGDREEAARPRLLPLLLVLLGCLG). Residues 42–131 (LGVAAEDAEV…KANLRRRRKR (90 aa)) constitute a propeptide that is removed on maturation. The short motif at 109 to 116 (PRCGVPDQ) is the Cysteine switch element. Cys-111 is a Zn(2+) binding site. Residues 132 to 625 (YALTGRKWNN…QMEEVARTVN (494 aa)) lie on the Extracellular side of the membrane. A glycan (N-linked (GlcNAc...) asparagine) is linked at Asn-150. Residue His-259 participates in Zn(2+) binding. Glu-260 is an active-site residue. Zn(2+) contacts are provided by His-263 and His-269. Residues 300 to 370 (QQLYGTPDGQ…RPDQYGPNIC (71 aa)) are disordered. The segment covering 305–322 (TPDGQPQPTQPLPTVTPR) has biased composition (low complexity). The segment covering 333–342 (RPPQPPPPGG) has biased composition (pro residues). Hemopexin repeat units follow at residues 367 to 415 (PNIC…WRGL), 416 to 461 (PGDI…GLGI), 463 to 511 (YDRI…QGIP), and 512 to 559 (ASPK…FMGC). Cysteines 370 and 559 form a disulfide. Residues 574 to 593 (RPPFNPHGGAEPGADSAEGD) form a disordered region. Position 589 is a phosphoserine (Ser-589). The chain crosses the membrane as a helical span at residues 626-646 (VVMVLVPLLLLLCVLGLTYAL). The Cytoplasmic segment spans residues 647-669 (VQMQRKGAPRVLLYCKRSLQEWV).

This sequence belongs to the peptidase M10A family. Requires Zn(2+) as cofactor. Ca(2+) is required as a cofactor. The precursor is cleaved by a furin endopeptidase. In terms of tissue distribution, appeared to be synthesized preferentially in liver, placenta, testis, colon and intestine. Substantial amounts are also detected in pancreas, kidney, lung, heart and skeletal muscle.

The protein resides in the membrane. Functionally, endopeptidase that degrades various components of the extracellular matrix. May activate progelatinase A. The chain is Matrix metalloproteinase-15 (MMP15) from Homo sapiens (Human).